A 27-amino-acid chain; its full sequence is Voltage-dependent anion-selective channel protein (27 aa).

This sequence belongs to the eukaryotic mitochondrial porin family. In terms of assembly, interacts with hexokinases. As to expression, photoreceptors.

The protein resides in the mitochondrion outer membrane. Functionally, forms a channel through the cell membrane that allows diffusion of small hydrophilic molecules. The chain is Voltage-dependent anion-selective channel protein from Doryteuthis pealeii (Longfin inshore squid).